Consider the following 195-residue polypeptide: Imidazoleglycerol-phosphate dehydratase (195 aa).

It belongs to the imidazoleglycerol-phosphate dehydratase family.

The protein resides in the cytoplasm. It catalyses the reaction D-erythro-1-(imidazol-4-yl)glycerol 3-phosphate = 3-(imidazol-4-yl)-2-oxopropyl phosphate + H2O. It participates in amino-acid biosynthesis; L-histidine biosynthesis; L-histidine from 5-phospho-alpha-D-ribose 1-diphosphate: step 6/9. This is Imidazoleglycerol-phosphate dehydratase from Ruegeria sp. (strain TM1040) (Silicibacter sp.).